The chain runs to 882 residues: Molybdenum cofactor sulfurase (882 aa).

Lys-265 is subject to N6-(pyridoxal phosphate)lysine. Residue Cys-425 is part of the active site. Residues 496–546 (GQPLPLATPGEAGAPPEDSEAQNAVPAARARGSSSPQEDTSPHSGVWNNSP) are disordered. A compositionally biased stretch (polar residues) spans 527-546 (GSSSPQEDTSPHSGVWNNSP). A phosphoserine mark is found at Ser-528 and Ser-530. Positions 707–868 (KQSSDFQRNA…LSVGSQVLPL (162 aa)) constitute an MOSC domain.

It belongs to the class-V pyridoxal-phosphate-dependent aminotransferase family. MOCOS subfamily. Requires pyridoxal 5'-phosphate as cofactor. As to expression, ubiquitously expressed.

It catalyses the reaction Mo-molybdopterin + L-cysteine + AH2 = thio-Mo-molybdopterin + L-alanine + A + H2O. It functions in the pathway cofactor biosynthesis; molybdopterin biosynthesis. Sulfurates the molybdenum cofactor. Sulfation of molybdenum is essential for xanthine dehydrogenase (XDH) and aldehyde oxidase (ADO) enzymes in which molybdenum cofactor is liganded by 1 oxygen and 1 sulfur atom in active form. This is Molybdenum cofactor sulfurase from Bos taurus (Bovine).